We begin with the raw amino-acid sequence, 414 residues long: MNYKAPRGTHDIFGINASGMSWLEQKAKVIFKRHGFEEVRTPVFEDAALFMRSIGQTTDIVEKEMYIFEDRKKRKLALRPEGTASLVRAFIEHRMDVSMPAGRFFYMGEMFRYERPQAGRYRQFHQIGAEFFGSSSPAADAEIIILAQHLLSSVGINEMNIYINSLGCEKCRPFFRETLVKYLGSVRDLCEDCLRRLEKNPLRILDCKTDSNKFTAVPRMSDYLCNCCKDNFSLTQSLLKSVGYNYTVDERLVRGLDYYTKTVFEIRSDAVGSQCALAAGGRYDNLVGELGGQDTPAVGFALGSERVLLAVQKTGFFGSFQESEKIFIAVADQELFSEAFSFAVKAMRNGLKGNKNISVFGPINGKSLTSQLKFADKIKAVKTIVFARTEFEYGKFLMKNMKDKTQTEFLISEF.

The protein belongs to the class-II aminoacyl-tRNA synthetase family. Homodimer.

The protein resides in the cytoplasm. It carries out the reaction tRNA(His) + L-histidine + ATP = L-histidyl-tRNA(His) + AMP + diphosphate + H(+). In Endomicrobium trichonymphae, this protein is Histidine--tRNA ligase.